The primary structure comprises 507 residues: Histidine ammonia-lyase (507 aa).

Residues 141–143 (ASG) constitute a cross-link (5-imidazolinone (Ala-Gly)). Ser142 is modified (2,3-didehydroalanine (Ser)).

Belongs to the PAL/histidase family. Post-translationally, contains an active site 4-methylidene-imidazol-5-one (MIO), which is formed autocatalytically by cyclization and dehydration of residues Ala-Ser-Gly.

It is found in the cytoplasm. The enzyme catalyses L-histidine = trans-urocanate + NH4(+). It functions in the pathway amino-acid degradation; L-histidine degradation into L-glutamate; N-formimidoyl-L-glutamate from L-histidine: step 1/3. This is Histidine ammonia-lyase from Burkholderia vietnamiensis (strain G4 / LMG 22486) (Burkholderia cepacia (strain R1808)).